We begin with the raw amino-acid sequence, 184 residues long: Shikimate kinase (184 aa).

Glycine 12–threonine 17 contributes to the ATP binding site. A Mg(2+)-binding site is contributed by serine 16. Residues aspartate 34, arginine 58, and glycine 80 each coordinate substrate. Arginine 117 contributes to the ATP binding site. Arginine 136 provides a ligand contact to substrate. Residue arginine 153 participates in ATP binding. The segment at methionine 163–threonine 184 is disordered. Residues proline 169–threonine 184 show a composition bias toward low complexity.

It belongs to the shikimate kinase family. Monomer. Mg(2+) serves as cofactor.

The protein resides in the cytoplasm. It carries out the reaction shikimate + ATP = 3-phosphoshikimate + ADP + H(+). Its pathway is metabolic intermediate biosynthesis; chorismate biosynthesis; chorismate from D-erythrose 4-phosphate and phosphoenolpyruvate: step 5/7. In terms of biological role, catalyzes the specific phosphorylation of the 3-hydroxyl group of shikimic acid using ATP as a cosubstrate. In Mycobacterium marinum (strain ATCC BAA-535 / M), this protein is Shikimate kinase.